The chain runs to 545 residues: Chaperonin GroEL (545 aa).

Residues 30–33 (TLGP), Lys51, 87–91 (DGTTT), Gly415, and Asp496 contribute to the ATP site.

This sequence belongs to the chaperonin (HSP60) family. In terms of assembly, forms a cylinder of 14 subunits composed of two heptameric rings stacked back-to-back. Interacts with the co-chaperonin GroES.

It localises to the cytoplasm. It carries out the reaction ATP + H2O + a folded polypeptide = ADP + phosphate + an unfolded polypeptide.. Its function is as follows. Together with its co-chaperonin GroES, plays an essential role in assisting protein folding. The GroEL-GroES system forms a nano-cage that allows encapsulation of the non-native substrate proteins and provides a physical environment optimized to promote and accelerate protein folding. The chain is Chaperonin GroEL from Chlorobaculum tepidum (strain ATCC 49652 / DSM 12025 / NBRC 103806 / TLS) (Chlorobium tepidum).